Consider the following 45-residue polypeptide: NLR family pyrin domain-containing protein 2B (45 aa).

As to expression, expressed in all tissues tested, including spleen, lymph node, thymus, tonsil, peripheral blood leukocyte, bone marrow, liver, heart, brain, placenta, lung, skeletal muscle, kidney and pancreas.

It is found in the cytoplasm. It localises to the nucleus. In terms of biological role, may function as a negative regulator of NF-kappa-B by preventing RELA/p65 phosphorylation at 'Ser-536', thereby inhibiting its transcriptional activity. Through NF-kappa-B regulation may control cytokine release upon Toll-like receptors activation and therefore play a role in modulation of innate immunity. May also play a role in cell cycle progression and apoptotic process. This is NLR family pyrin domain-containing protein 2B from Homo sapiens (Human).